The primary structure comprises 132 residues: Small ribosomal subunit protein uS8 (132 aa).

This sequence belongs to the universal ribosomal protein uS8 family. Part of the 30S ribosomal subunit. Contacts proteins S5 and S12.

Functionally, one of the primary rRNA binding proteins, it binds directly to 16S rRNA central domain where it helps coordinate assembly of the platform of the 30S subunit. The chain is Small ribosomal subunit protein uS8 from Paramagnetospirillum magneticum (strain ATCC 700264 / AMB-1) (Magnetospirillum magneticum).